Here is a 378-residue protein sequence, read N- to C-terminus: 23S rRNA (uracil(747)-C(5))-methyltransferase RlmC (378 aa).

The [4Fe-4S] cluster site is built by Cys-3, Cys-11, Cys-14, and Cys-87. Residues Gln-212, Phe-241, Glu-262, and Asn-309 each contribute to the S-adenosyl-L-methionine site. Catalysis depends on Cys-336, which acts as the Nucleophile.

This sequence belongs to the class I-like SAM-binding methyltransferase superfamily. RNA M5U methyltransferase family. RlmC subfamily.

It carries out the reaction uridine(747) in 23S rRNA + S-adenosyl-L-methionine = 5-methyluridine(747) in 23S rRNA + S-adenosyl-L-homocysteine + H(+). In terms of biological role, catalyzes the formation of 5-methyl-uridine at position 747 (m5U747) in 23S rRNA. The chain is 23S rRNA (uracil(747)-C(5))-methyltransferase RlmC from Shewanella halifaxensis (strain HAW-EB4).